Reading from the N-terminus, the 160-residue chain is UPF0225 protein CGSHiGG_04185 (160 aa).

The protein belongs to the UPF0225 family.

The polypeptide is UPF0225 protein CGSHiGG_04185 (Haemophilus influenzae (strain PittGG)).